A 593-amino-acid chain; its full sequence is Immunoglobulin G-binding protein G (593 aa).

A signal peptide spans 1-33; that stretch reads MEKEKKVKYFLRKSAFGLASVSAAFLVGSTVFA. Tandem repeats lie at residues 104 to 140, 179 to 215, 254 to 290, 303 to 357, and 373 to 427. The interval 104 to 290 is 3 X 37 AA repeats; sequence LAKAKADALK…AKTVEGVKAL (187 aa). Residues 303–427 form a 2 X 55 AA repeats region; that stretch reads TYKLILNGKT…DATKTFTVTE (125 aa). Residues 503–567 are disordered; it reads PGDAPTEPEK…TLPTTGEGSN (65 aa). Residues 529–557 show a composition bias toward basic and acidic residues; it reads AKDDAKKDDTKKEDAKKPEAKKEDAKKAE. The segment at 531–555 is 5 X 5 AA repeats of [DE]-D-A-K-K; sequence DDAKKDDTKKEDAKKPEAKKEDAKK. Positions 559-563 match the LPXTG sorting signal motif; it reads LPTTG. Thr562 carries the pentaglycyl murein peptidoglycan amidated threonine modification. Residues 563 to 593 constitute a propeptide, removed by sortase; the sequence is GEGSNPFFTAAALAVMAGAGALAVASKRKED.

The protein resides in the secreted. It is found in the cell wall. The chain is Immunoglobulin G-binding protein G (spg) from Streptococcus sp. group G.